Consider the following 527-residue polypeptide: Peptide chain release factor 3 (527 aa).

Residues 9 to 277 enclose the tr-type G domain; sequence AKRRTFAIIS…AVVNWAPKPL (269 aa). GTP is bound by residues 18–25, 86–90, and 140–143; these read SHPDAGKT, DTPGH, and NKLD.

Belongs to the TRAFAC class translation factor GTPase superfamily. Classic translation factor GTPase family. PrfC subfamily.

It localises to the cytoplasm. Increases the formation of ribosomal termination complexes and stimulates activities of RF-1 and RF-2. It binds guanine nucleotides and has strong preference for UGA stop codons. It may interact directly with the ribosome. The stimulation of RF-1 and RF-2 is significantly reduced by GTP and GDP, but not by GMP. In Pseudomonas syringae pv. syringae (strain B728a), this protein is Peptide chain release factor 3.